The sequence spans 261 residues: NAD-capped RNA hydrolase NudC (261 aa).

Residue Arg-69 participates in substrate binding. Residues Cys-98 and Cys-101 each coordinate Zn(2+). Glu-111 contributes to the substrate binding site. Residues Cys-116 and Cys-119 each coordinate Zn(2+). Tyr-124 is a substrate binding site. Positions 125-248 (PQIAPCIIVA…TVARRLIEDT (124 aa)) constitute a Nudix hydrolase domain. Positions 158, 174, and 178 each coordinate a divalent metal cation. A Nudix box motif is present at residues 159 to 180 (GFVEVGETLEQTVAREVMEESS). 192–199 (QPWPFPQS) is a substrate binding site. A divalent metal cation is bound at residue Glu-219. Ala-241 is a binding site for substrate.

Belongs to the Nudix hydrolase family. NudC subfamily. As to quaternary structure, homodimer. Requires Mg(2+) as cofactor. Mn(2+) serves as cofactor. The cofactor is Zn(2+).

The enzyme catalyses a 5'-end NAD(+)-phospho-ribonucleoside in mRNA + H2O = a 5'-end phospho-adenosine-phospho-ribonucleoside in mRNA + beta-nicotinamide D-ribonucleotide + 2 H(+). It catalyses the reaction NAD(+) + H2O = beta-nicotinamide D-ribonucleotide + AMP + 2 H(+). It carries out the reaction NADH + H2O = reduced beta-nicotinamide D-ribonucleotide + AMP + 2 H(+). MRNA decapping enzyme that specifically removes the nicotinamide adenine dinucleotide (NAD) cap from a subset of mRNAs by hydrolyzing the diphosphate linkage to produce nicotinamide mononucleotide (NMN) and 5' monophosphate mRNA. The NAD-cap is present at the 5'-end of some mRNAs and stabilizes RNA against 5'-processing. Has preference for mRNAs with a 5'-end purine. Catalyzes the hydrolysis of a broad range of dinucleotide pyrophosphates. The protein is NAD-capped RNA hydrolase NudC of Erwinia tasmaniensis (strain DSM 17950 / CFBP 7177 / CIP 109463 / NCPPB 4357 / Et1/99).